We begin with the raw amino-acid sequence, 271 residues long: Pyrroline-5-carboxylate reductase (271 aa).

This sequence belongs to the pyrroline-5-carboxylate reductase family.

Its subcellular location is the cytoplasm. It catalyses the reaction L-proline + NADP(+) = (S)-1-pyrroline-5-carboxylate + NADPH + 2 H(+). The enzyme catalyses L-proline + NAD(+) = (S)-1-pyrroline-5-carboxylate + NADH + 2 H(+). Its pathway is amino-acid biosynthesis; L-proline biosynthesis; L-proline from L-glutamate 5-semialdehyde: step 1/1. In terms of biological role, catalyzes the reduction of 1-pyrroline-5-carboxylate (PCA) to L-proline. This Staphylococcus saprophyticus subsp. saprophyticus (strain ATCC 15305 / DSM 20229 / NCIMB 8711 / NCTC 7292 / S-41) protein is Pyrroline-5-carboxylate reductase.